Consider the following 492-residue polypeptide: Glutamyl-tRNA(Gln) amidotransferase subunit A (492 aa).

Residues lysine 78 and serine 158 each act as charge relay system in the active site. The Acyl-ester intermediate role is filled by serine 182.

Belongs to the amidase family. GatA subfamily. In terms of assembly, heterotrimer of A, B and C subunits.

It catalyses the reaction L-glutamyl-tRNA(Gln) + L-glutamine + ATP + H2O = L-glutaminyl-tRNA(Gln) + L-glutamate + ADP + phosphate + H(+). Allows the formation of correctly charged Gln-tRNA(Gln) through the transamidation of misacylated Glu-tRNA(Gln) in organisms which lack glutaminyl-tRNA synthetase. The reaction takes place in the presence of glutamine and ATP through an activated gamma-phospho-Glu-tRNA(Gln). This Parvibaculum lavamentivorans (strain DS-1 / DSM 13023 / NCIMB 13966) protein is Glutamyl-tRNA(Gln) amidotransferase subunit A.